A 379-amino-acid chain; its full sequence is Putative zinc metalloprotease sll0528 (379 aa).

The next 2 membrane-spanning stretches (helical) occupy residues 20–40 (LFGIPFYVNPSWFLILGLVTL) and 54–74 (GGTPWILGLITALLLFASVVA). Residue His-75 coordinates Zn(2+). The active site involves Glu-76. His-79 contributes to the Zn(2+) binding site. The next 3 membrane-spanning stretches (helical) occupy residues 115–135 (FAVAIAGPAVSLVLFLGLTIV), 148–168 (IIGLLGMINLALALFNLIPGL), and 212–232 (GILNILPIGSFWTILIGWFLL). CBS domains lie at 257-315 (VIPN…DWPQ) and 322-379 (MQYP…TSAA).

Belongs to the peptidase M50B family. Requires Zn(2+) as cofactor.

Its subcellular location is the cell membrane. The chain is Putative zinc metalloprotease sll0528 from Synechocystis sp. (strain ATCC 27184 / PCC 6803 / Kazusa).